Consider the following 142-residue polypeptide: Transcriptional regulator MraZ (142 aa).

2 consecutive SpoVT-AbrB domains span residues 5 to 47 (THTP…PTPE) and 76 to 119 (AHDE…DRVA).

Belongs to the MraZ family. As to quaternary structure, forms oligomers.

Its subcellular location is the cytoplasm. It localises to the nucleoid. The sequence is that of Transcriptional regulator MraZ from Salinispora tropica (strain ATCC BAA-916 / DSM 44818 / JCM 13857 / NBRC 105044 / CNB-440).